The sequence spans 177 residues: Large ribosomal subunit protein uL6 (177 aa).

It belongs to the universal ribosomal protein uL6 family. As to quaternary structure, part of the 50S ribosomal subunit.

Functionally, this protein binds to the 23S rRNA, and is important in its secondary structure. It is located near the subunit interface in the base of the L7/L12 stalk, and near the tRNA binding site of the peptidyltransferase center. In Haemophilus influenzae (strain 86-028NP), this protein is Large ribosomal subunit protein uL6.